The primary structure comprises 282 residues: Farnesyl diphosphate synthase (282 aa).

Isopentenyl diphosphate-binding residues include K45, R48, and H77. Residues D84 and D90 each contribute to the Mg(2+) site. A (2E)-geranyl diphosphate-binding site is contributed by R95. Residue R96 participates in isopentenyl diphosphate binding. Residues K181, T182, and Q220 each coordinate (2E)-geranyl diphosphate.

The protein belongs to the FPP/GGPP synthase family. Mg(2+) is required as a cofactor.

It localises to the cytoplasm. The catalysed reaction is isopentenyl diphosphate + (2E)-geranyl diphosphate = (2E,6E)-farnesyl diphosphate + diphosphate. In Buchnera aphidicola subsp. Acyrthosiphon pisum (strain APS) (Acyrthosiphon pisum symbiotic bacterium), this protein is Farnesyl diphosphate synthase (ispA).